The chain runs to 226 residues: ATP synthase F(0) complex subunit a (226 aa).

The next 6 membrane-spanning stretches (helical) occupy residues 6–26 (FASF…IIMF), 68–88 (WSLM…LGLL), 97–117 (QLSM…FTGF), 136–156 (LLIP…PVAL), 164–184 (ITAG…LLNI), and 189–209 (AFIT…VALI).

This sequence belongs to the ATPase A chain family. As to quaternary structure, component of the ATP synthase complex composed at least of ATP5F1A/subunit alpha, ATP5F1B/subunit beta, ATP5MC1/subunit c (homooctomer), MT-ATP6/subunit a, MT-ATP8/subunit 8, ATP5ME/subunit e, ATP5MF/subunit f, ATP5MG/subunit g, ATP5MK/subunit k, ATP5MJ/subunit j, ATP5F1C/subunit gamma, ATP5F1D/subunit delta, ATP5F1E/subunit epsilon, ATP5PF/subunit F6, ATP5PB/subunit b, ATP5PD/subunit d, ATP5PO/subunit OSCP. ATP synthase complex consists of a soluble F(1) head domain (subunits alpha(3) and beta(3)) - the catalytic core - and a membrane F(0) domain - the membrane proton channel (subunits c, a, 8, e, f, g, k and j). These two domains are linked by a central stalk (subunits gamma, delta, and epsilon) rotating inside the F1 region and a stationary peripheral stalk (subunits F6, b, d, and OSCP). Interacts with DNAJC30; interaction is direct.

The protein localises to the mitochondrion inner membrane. It catalyses the reaction H(+)(in) = H(+)(out). Functionally, subunit a, of the mitochondrial membrane ATP synthase complex (F(1)F(0) ATP synthase or Complex V) that produces ATP from ADP in the presence of a proton gradient across the membrane which is generated by electron transport complexes of the respiratory chain. ATP synthase complex consist of a soluble F(1) head domain - the catalytic core - and a membrane F(1) domain - the membrane proton channel. These two domains are linked by a central stalk rotating inside the F(1) region and a stationary peripheral stalk. During catalysis, ATP synthesis in the catalytic domain of F(1) is coupled via a rotary mechanism of the central stalk subunits to proton translocation. With the subunit c (ATP5MC1), forms the proton-conducting channel in the F(0) domain, that contains two crucial half-channels (inlet and outlet) that facilitate proton movement from the mitochondrial intermembrane space (IMS) into the matrix. Protons are taken up via the inlet half-channel and released through the outlet half-channel, following a Grotthuss mechanism. The sequence is that of ATP synthase F(0) complex subunit a from Sus scrofa (Pig).